The following is a 95-amino-acid chain: Aspartyl/glutamyl-tRNA(Asn/Gln) amidotransferase subunit C (95 aa).

This sequence belongs to the GatC family. In terms of assembly, heterotrimer of A, B and C subunits.

The enzyme catalyses L-glutamyl-tRNA(Gln) + L-glutamine + ATP + H2O = L-glutaminyl-tRNA(Gln) + L-glutamate + ADP + phosphate + H(+). It catalyses the reaction L-aspartyl-tRNA(Asn) + L-glutamine + ATP + H2O = L-asparaginyl-tRNA(Asn) + L-glutamate + ADP + phosphate + 2 H(+). Functionally, allows the formation of correctly charged Asn-tRNA(Asn) or Gln-tRNA(Gln) through the transamidation of misacylated Asp-tRNA(Asn) or Glu-tRNA(Gln) in organisms which lack either or both of asparaginyl-tRNA or glutaminyl-tRNA synthetases. The reaction takes place in the presence of glutamine and ATP through an activated phospho-Asp-tRNA(Asn) or phospho-Glu-tRNA(Gln). The chain is Aspartyl/glutamyl-tRNA(Asn/Gln) amidotransferase subunit C from Brucella melitensis biotype 2 (strain ATCC 23457).